Reading from the N-terminus, the 627-residue chain is MACPF domain-containing protein At1g14780 (627 aa).

One can recognise an MACPF domain in the interval 1–339 (MSRDGGDVIE…PPLMDLQYFL (339 aa)).

It belongs to the complement C6/C7/C8/C9 (TC 1.C.39) family.

Its function is as follows. Negatively controls the salicylic acid (SA)-mediated pathway of programmed cell death in plant immunity. The chain is MACPF domain-containing protein At1g14780 from Arabidopsis thaliana (Mouse-ear cress).